The primary structure comprises 217 residues: uncharacterized protein (217 aa).

In terms of domain architecture, ABC transporter spans 14 to 217; the sequence is LAVNNLCIER…NELATEIISL (204 aa). Residue 46–53 coordinates ATP; the sequence is GEIGSGKT.

This sequence belongs to the ABC transporter superfamily.

This is an uncharacterized protein from Haemophilus influenzae (strain ATCC 51907 / DSM 11121 / KW20 / Rd).